A 196-amino-acid polypeptide reads, in one-letter code: Large ribosomal subunit protein bL25 (196 aa).

Residues 177 to 196 (VISIAPPKKDAEAETESAAG) are disordered.

It belongs to the bacterial ribosomal protein bL25 family. CTC subfamily. In terms of assembly, part of the 50S ribosomal subunit; part of the 5S rRNA/L5/L18/L25 subcomplex. Contacts the 5S rRNA. Binds to the 5S rRNA independently of L5 and L18.

This is one of the proteins that binds to the 5S RNA in the ribosome where it forms part of the central protuberance. The chain is Large ribosomal subunit protein bL25 from Chlorobium limicola (strain DSM 245 / NBRC 103803 / 6330).